Reading from the N-terminus, the 418-residue chain is Hydroxysteroid dehydrogenase-like protein 2 (418 aa).

Residues 17–23 (GASRGIG), lysine 42, and aspartate 74 contribute to the NADP(+) site. Lysine 42 is modified (N6-(2-hydroxyisobutyryl)lysine). Lysine 116 carries the post-translational modification N6-acetyllysine. The active-site Proton acceptor is the tyrosine 168. Position 172 (lysine 172) interacts with NADP(+). The tract at residues 287 to 310 (STGAVPEFKEEKPQPQPKPRSGAV) is disordered. One can recognise an SCP2 domain in the interval 306–415 (RSGAVEETFR…KLEKLMNQMN (110 aa)). Position 318 is an N6-succinyllysine (lysine 318).

It belongs to the short-chain dehydrogenases/reductases (SDR) family.

The protein resides in the peroxisome. Its subcellular location is the mitochondrion. Its function is as follows. Has apparently no steroid dehydrogenase activity. Controls bile acid (BA) and lipid metabolism in response to nutritional cues. This chain is Hydroxysteroid dehydrogenase-like protein 2 (HSDL2), found in Pongo abelii (Sumatran orangutan).